Reading from the N-terminus, the 388-residue chain is Ribonucleoside-diphosphate reductase subunit beta (388 aa).

Aspartate 84, glutamate 115, and histidine 118 together coordinate Fe cation. Tyrosine 122 is a catalytic residue. Residues glutamate 212, glutamate 247, and histidine 250 each coordinate Fe cation.

It belongs to the ribonucleoside diphosphate reductase small chain family. In terms of assembly, heterodimer of a large and a small subunit. Requires Fe cation as cofactor.

The catalysed reaction is a 2'-deoxyribonucleoside 5'-diphosphate + [thioredoxin]-disulfide + H2O = a ribonucleoside 5'-diphosphate + [thioredoxin]-dithiol. Its function is as follows. Provides the precursors necessary for DNA synthesis. Catalyzes the biosynthesis of deoxyribonucleotides from the corresponding ribonucleotides. This chain is Ribonucleoside-diphosphate reductase subunit beta (NRDB), found in Escherichia coli (Bacteriophage T4).